The sequence spans 935 residues: Phosphoenolpyruvate carboxylase (935 aa).

Active-site residues include histidine 161 and lysine 593.

It belongs to the PEPCase type 1 family. Mg(2+) serves as cofactor.

The catalysed reaction is oxaloacetate + phosphate = phosphoenolpyruvate + hydrogencarbonate. In terms of biological role, forms oxaloacetate, a four-carbon dicarboxylic acid source for the tricarboxylic acid cycle. This chain is Phosphoenolpyruvate carboxylase, found in Mycolicibacterium paratuberculosis (strain ATCC BAA-968 / K-10) (Mycobacterium paratuberculosis).